A 364-amino-acid polypeptide reads, in one-letter code: Aminomethyltransferase (364 aa).

It belongs to the GcvT family. In terms of assembly, the glycine cleavage system is composed of four proteins: P, T, L and H.

The catalysed reaction is N(6)-[(R)-S(8)-aminomethyldihydrolipoyl]-L-lysyl-[protein] + (6S)-5,6,7,8-tetrahydrofolate = N(6)-[(R)-dihydrolipoyl]-L-lysyl-[protein] + (6R)-5,10-methylene-5,6,7,8-tetrahydrofolate + NH4(+). Its function is as follows. The glycine cleavage system catalyzes the degradation of glycine. This Shewanella loihica (strain ATCC BAA-1088 / PV-4) protein is Aminomethyltransferase.